Here is a 174-residue protein sequence, read N- to C-terminus: MAAAKKGAKPKVAGVRFAAGFPEEGAHNHVHFDEQLHDSVVMVSQQEDGNFLVKVGFLKILHKYEISFSLPPVQRLGKSICAVPLPTLNLKVLSITSQAEGHSIKCEYTAHKEGVLKEEMILASETNDKAFVKVVVQARVLDRHHGTPMLLEGVRCTGTELEYDSEQSDWHGFD.

This sequence belongs to the ADISSP family.

Its subcellular location is the secreted. In terms of biological role, may be involved in thermogenesis and glucose homeostasis. The sequence is that of Adipose-secreted signaling protein from Xenopus tropicalis (Western clawed frog).